The chain runs to 303 residues: Sulfotransferase 6B1 (303 aa).

Residue 65 to 70 (KCGSNW) coordinates 3'-phosphoadenylyl sulfate. His118 acts as the Proton acceptor in catalysis. 3'-phosphoadenylyl sulfate is bound by residues Arg140, Ser148, Tyr203, 237 to 242 (STFQAM), and 259 to 261 (RKG).

The protein belongs to the sulfotransferase 1 family.

The protein resides in the cytoplasm. It is found in the cytosol. It carries out the reaction thyroxine + 3'-phosphoadenylyl sulfate = thyroxine sulfate + adenosine 3',5'-bisphosphate + H(+). In terms of biological role, sulfotransferase that utilizes 3'-phospho-5'-adenylyl sulfate (PAPS) as sulfonate donor to catalyze the sulfate conjugation of thyroxine. Involved in the metabolism of thyroxine. This Pan troglodytes (Chimpanzee) protein is Sulfotransferase 6B1 (SULT6B1).